Consider the following 196-residue polypeptide: Imidazoleglycerol-phosphate dehydratase (196 aa).

This sequence belongs to the imidazoleglycerol-phosphate dehydratase family.

It is found in the cytoplasm. The enzyme catalyses D-erythro-1-(imidazol-4-yl)glycerol 3-phosphate = 3-(imidazol-4-yl)-2-oxopropyl phosphate + H2O. The protein operates within amino-acid biosynthesis; L-histidine biosynthesis; L-histidine from 5-phospho-alpha-D-ribose 1-diphosphate: step 6/9. This is Imidazoleglycerol-phosphate dehydratase from Clostridium botulinum (strain Okra / Type B1).